The chain runs to 421 residues: Medium-chain specific acyl-CoA dehydrogenase, mitochondrial (421 aa).

The N-terminal 25 residues, M1 to T25, are a transit peptide targeting the mitochondrion. At K69 the chain carries N6-acetyllysine; alternate. K69 is modified (N6-succinyllysine; alternate). The residue at position 79 (K79) is an N6-acetyllysine. Residue Y158–S167 coordinates FAD. An octanoyl-CoA-binding site is contributed by S167. At K179 the chain carries N6-succinyllysine. W191–T193 contacts FAD. N6-acetyllysine; alternate is present on K212. K212 is modified (N6-succinyllysine; alternate). Residue S216 participates in octanoyl-CoA binding. Residues K217, K259, and K271 each carry the N6-acetyllysine; alternate modification. N6-succinyllysine; alternate occurs at positions 217, 259, and 271. D278 is a binding site for octanoyl-CoA. K279 is subject to N6-acetyllysine. R281 contacts octanoyl-CoA. N6-acetyllysine is present on K301. FAD-binding positions include R306–T308 and H316–Q317. The octanoyl-CoA site is built by R349 and T351. At T351 the chain carries Phosphothreonine. Q374–G378 contacts FAD. Octanoyl-CoA is bound at residue E401. E401 serves as the catalytic Proton acceptor. G402–Q405 is a binding site for FAD.

It belongs to the acyl-CoA dehydrogenase family. In terms of assembly, homotetramer. Interacts with the heterodimeric electron transfer flavoprotein ETF. Requires FAD as cofactor. In terms of processing, acetylated. Could occur at proximity of the cofactor-binding sites and reduce the catalytic activity. Could be deacetylated by SIRT3.

The protein localises to the mitochondrion matrix. It catalyses the reaction a medium-chain 2,3-saturated fatty acyl-CoA + oxidized [electron-transfer flavoprotein] + H(+) = a medium-chain (2E)-enoyl-CoA + reduced [electron-transfer flavoprotein]. The enzyme catalyses pentanoyl-CoA + oxidized [electron-transfer flavoprotein] + H(+) = (2E)-pentenoyl-CoA + reduced [electron-transfer flavoprotein]. The catalysed reaction is hexanoyl-CoA + oxidized [electron-transfer flavoprotein] + H(+) = (2E)-hexenoyl-CoA + reduced [electron-transfer flavoprotein]. It carries out the reaction octanoyl-CoA + oxidized [electron-transfer flavoprotein] + H(+) = (2E)-octenoyl-CoA + reduced [electron-transfer flavoprotein]. It catalyses the reaction decanoyl-CoA + oxidized [electron-transfer flavoprotein] + H(+) = (2E)-decenoyl-CoA + reduced [electron-transfer flavoprotein]. The enzyme catalyses dodecanoyl-CoA + oxidized [electron-transfer flavoprotein] + H(+) = (2E)-dodecenoyl-CoA + reduced [electron-transfer flavoprotein]. The catalysed reaction is tetradecanoyl-CoA + oxidized [electron-transfer flavoprotein] + H(+) = (2E)-tetradecenoyl-CoA + reduced [electron-transfer flavoprotein]. It carries out the reaction oxidized [electron-transfer flavoprotein] + hexadecanoyl-CoA + H(+) = (2E)-hexadecenoyl-CoA + reduced [electron-transfer flavoprotein]. Its pathway is lipid metabolism; mitochondrial fatty acid beta-oxidation. Medium-chain specific acyl-CoA dehydrogenase is one of the acyl-CoA dehydrogenases that catalyze the first step of mitochondrial fatty acid beta-oxidation, an aerobic process breaking down fatty acids into acetyl-CoA and allowing the production of energy from fats. The first step of fatty acid beta-oxidation consists in the removal of one hydrogen from C-2 and C-3 of the straight-chain fatty acyl-CoA thioester, resulting in the formation of trans-2-enoyl-CoA. Electron transfer flavoprotein (ETF) is the electron acceptor that transfers electrons to the main mitochondrial respiratory chain via ETF-ubiquinone oxidoreductase (ETF dehydrogenase). Among the different mitochondrial acyl-CoA dehydrogenases, medium-chain specific acyl-CoA dehydrogenase acts specifically on acyl-CoAs with saturated 6 to 12 carbons long primary chains. The sequence is that of Medium-chain specific acyl-CoA dehydrogenase, mitochondrial from Bos taurus (Bovine).